Consider the following 698-residue polypeptide: Inner centromere protein SLI15 (698 aa).

Position 268 is a phosphoserine (Ser-268). Disordered stretches follow at residues 365 to 390, 405 to 444, and 455 to 474; these read KNKI…FDKT, EQKK…EVKN, and RPTK…TSQT. Composition is skewed to polar residues over residues 422 to 439 and 459 to 474; these read RPHS…SSPS and ASIS…TSQT. Ser-489 bears the Phosphoserine mark. Residues 535 to 560 form a disordered region; sequence IMRSQQEHHRRKQEKQKRMSHLEQDL. Basic and acidic residues predominate over residues 550–560; it reads QKRMSHLEQDL.

The protein belongs to the INCENP family. As to quaternary structure, component of the CPC complex at least composed of IPL1, BIR1 and SLI15. In terms of processing, phosphorylated by serine/threonine protein kinase IPL1.

The protein localises to the nucleus. It localises to the cytoplasm. The protein resides in the cytoskeleton. Its subcellular location is the spindle. It is found in the chromosome. The protein localises to the centromere. It localises to the kinetochore. Its function is as follows. Component of the chromosomal passenger complex (CPC), a complex that acts as a key regulator of mitosis. Stimulates IPL1 kinase activity and facilitates its association with the mitotic spindle. Has a role in attaching the kinetochores to the microtubules and ensuring that sister kinetochores connect to opposite poles. The protein is Inner centromere protein SLI15 (SLI15) of Saccharomyces cerevisiae (strain ATCC 204508 / S288c) (Baker's yeast).